Here is a 183-residue protein sequence, read N- to C-terminus: Helofensin-2 (183 aa).

The N-terminal stretch at 1–26 is a signal peptide; that stretch reads MQMDWLFIAVISGIGLLSSGVPGTQG. A C(6)C(4)C(9)C(6)CC 1; approximate repeat occupies 27 to 64; sequence AYTTEQCRALNGSCNFYACFPKNVIIGKCDWWGWSCCA. A C(6)C(4)C(9)C(6)CC 2; approximate repeat occupies 65-101; it reads RTPLERCTAKKGTCTKTGCTKTDTDHGPCDGGAQCCQ. Residues 102–139 form a C(6)C(4)C(9)C(6)CC 3; approximate repeat; sequence RDPVKYCKFHGNVCGRGKCPMDHIPIGEQCMPGYPCCK. Residues 140–177 form a C(6)C(4)C(9)C(6)CC 4; approximate repeat; it reads RDGPAYCKSKGGKCLRRCSQIVPTDIIGVCADGVPCCK.

It belongs to the beta-defensin family. Helofensin subfamily. In terms of tissue distribution, expressed by the mandibular venom gland.

It localises to the secreted. In terms of biological role, lethal toxin which possesses an inhibitory effect on direct electrical stimulation of the isolated hemi-diaphragm of mice. Neither hemorrhagic nor hemolytic activities are detected. Phospholipase A2 activity, proteolytic activity and arginine esterolytic activity are absent. The polypeptide is Helofensin-2 (Heloderma suspectum cinctum (Banded Gila monster)).